Consider the following 178-residue polypeptide: Riboflavin kinase (178 aa).

Positions 39 and 41 each coordinate Mg(2+). Glu-116 (nucleophile) is an active-site residue.

This sequence belongs to the flavokinase family. Zn(2+) is required as a cofactor. It depends on Mg(2+) as a cofactor.

The catalysed reaction is riboflavin + ATP = FMN + ADP + H(+). Its pathway is cofactor biosynthesis; FMN biosynthesis; FMN from riboflavin (ATP route): step 1/1. Catalyzes the phosphorylation of riboflavin (vitamin B2) to form flavin mononucleotide (FMN) coenzyme. This chain is Riboflavin kinase (FMN1), found in Scheffersomyces stipitis (strain ATCC 58785 / CBS 6054 / NBRC 10063 / NRRL Y-11545) (Yeast).